A 528-amino-acid polypeptide reads, in one-letter code: MYGIYGLFFAAVALYSVALVIYRLYLHPLSRFPGPKIAAATGWYEFYHEVIRGGMYIHEIQRMHREYGPIIRINPYEIVINDPDYYTTVYVASNTRRSEKWYTLQGTGLEGKALSFFSHFRTCRTRMHMTDQIVGAMGMTMGHELHRRRRKHFDPFFSRLGVTQIEGVILDEIQLLTDRLEGNRKSGRTIQMEHVMAAFTGDIVTKICSEKSPDMIRHPDFGKEWYVTIHTYQLQVHLFVQFPYLISLTQLIPRGLVMHFSPGAAAFKSLHQYAFDHITEAKKDMGRAVKVQQEAGRSSVFRHVLSSDMPGTERETERLAREALQLFGAGTATLVRAFSMIFYHVLSDPQMRGQLREELKDIMAGYPAKRPTWQELERLPYLHGIVKEGLRLSYGVMRHLARVSPDQPLQFREWTIPAGTPVGMSSHSLHSDPETFPEPARFLPERWMKDRHHPNMNRNWVPFARGSRMCIGMNLALAEMYWVLAVLFRPGAPQLELFETTEADVVPVRDYVGGIPEFGTKGVRVRVV.

The chain crosses the membrane as a helical span at residues 5-27 (YGLFFAAVALYSVALVIYRLYLH). Heme is bound at residue Cys470.

This sequence belongs to the cytochrome P450 family. It depends on heme as a cofactor.

Its subcellular location is the membrane. The catalysed reaction is variecoladiene + 4 reduced [NADPH--hemoprotein reductase] + 4 O2 = variecolin + 4 oxidized [NADPH--hemoprotein reductase] + 6 H2O + 4 H(+). Its pathway is secondary metabolite biosynthesis; terpenoid biosynthesis. Functionally, cytochrome P450 monooxygenase; part of the gene cluster that mediates the biosynthesis of the sesterterpene variecolin. The first step in the pathway is performed by the variecoladiene synthase vrcA that possesses both prenyl transferase and terpene cyclase activity, converting isopentenyl diphosphate and dimethylallyl diphosphate into geranylfarnesyl pyrophosphate (GFPP) and then converting GFPP into the tetracyclic variecoladiene. The cytochrome P450 monooxygenase vrcB then catalyzes multiple oxidations at C-5 and C-20 positions to yield variecolin. This is Cytochrome P450 monooxygenase vrcB from Aspergillus aculeatus (strain ATCC 16872 / CBS 172.66 / WB 5094).